Here is a 136-residue protein sequence, read N- to C-terminus: Small ribosomal subunit protein uS9 (136 aa).

The segment at 111–136 (DARRTEPHKPSRSTKGPRAKRQKSYR) is disordered. Residues 120–136 (PSRSTKGPRAKRQKSYR) are compositionally biased toward basic residues.

It belongs to the universal ribosomal protein uS9 family.

The sequence is that of Small ribosomal subunit protein uS9 (rps9) from Methanocaldococcus jannaschii (strain ATCC 43067 / DSM 2661 / JAL-1 / JCM 10045 / NBRC 100440) (Methanococcus jannaschii).